The following is a 339-amino-acid chain: tRNA N6-adenosine threonylcarbamoyltransferase (339 aa).

Fe cation is bound by residues His111 and His115. Substrate-binding positions include 134–138, Asp167, Gly180, and Asn279; that span reads VVSGG. Asp307 provides a ligand contact to Fe cation.

This sequence belongs to the KAE1 / TsaD family. It depends on Fe(2+) as a cofactor.

The protein resides in the cytoplasm. It carries out the reaction L-threonylcarbamoyladenylate + adenosine(37) in tRNA = N(6)-L-threonylcarbamoyladenosine(37) in tRNA + AMP + H(+). Its function is as follows. Required for the formation of a threonylcarbamoyl group on adenosine at position 37 (t(6)A37) in tRNAs that read codons beginning with adenine. Is involved in the transfer of the threonylcarbamoyl moiety of threonylcarbamoyl-AMP (TC-AMP) to the N6 group of A37, together with TsaE and TsaB. TsaD likely plays a direct catalytic role in this reaction. The protein is tRNA N6-adenosine threonylcarbamoyltransferase of Syntrophobacter fumaroxidans (strain DSM 10017 / MPOB).